Here is a 1805-residue protein sequence, read N- to C-terminus: Obscurin-like protein 1 (1805 aa).

S10 is subject to Phosphoserine. Positions 12–100 (PCFLRFPRPV…GEAYAAAAVT (89 aa)) constitute an Ig-like 1 domain. Residues 17–19 (FPR) form an interaction with TTN region. An intrachain disulfide couples C33 to C84. Residues 85-94 (RARNAAGEAY) are interaction with TTN. Over residues 104–122 (PPAPEPEPQSSECPPPPPG) the composition is skewed to pro residues. Residues 104–131 (PPAPEPEPQSSECPPPPPGTGEGAPVFL) form a disordered region. 3 Ig-like domains span residues 128-225 (PVFL…ALLQ), 240-330 (PPVR…QTLS), and 339-425 (PRLR…ANVT). Disulfide bonds link C149/C209, C267/C319, and C362/C412. One can recognise a Fibronectin type-III domain in the interval 517-615 (PPGPPVLVEM…FNGSAHLVPT (99 aa)). Ig-like domains lie at 720–800 (PQDK…FSVT), 804–891 (PPVH…FTVT), 902–982 (PNGK…FTIT), 986–1075 (PPVR…VTVT), 1078–1165 (PERI…FNVS), 1176–1261 (PEAV…FNVQ), 1266–1351 (PPVK…ARLH), 1355–1442 (TELL…ARLS), 1536–1628 (PVTI…REVS), and 1702–1798 (PAQS…ADTQ). 6 disulfides stabilise this stretch: C738–C788, C829–C879, C920–C970, C1011–C1061, C1103–C1153, and C1195–C1245. A disulfide bond links C1558 and C1608.

Component of the 3M complex, composed of core components CUL7, CCDC8 and OBSL1. Interacts with CCDC8. Interacts with CUL7; the interaction is direct. Interacts with FBXW8. Interacts (via N-terminal Ig-like domain) with TTN/titin (via C-terminal Ig-like domain); the interaction is direct. In terms of tissue distribution, expressed in granule neurons, with levels decreasing with neuronal maturation.

It is found in the cytoplasm. The protein localises to the perinuclear region. It localises to the golgi apparatus. Functionally, core component of the 3M complex, a complex required to regulate microtubule dynamics and genome integrity. It is unclear how the 3M complex regulates microtubules, it could act by controlling the level of a microtubule stabilizer. Acts as a regulator of the Cul7-RING(FBXW8) ubiquitin-protein ligase, playing a critical role in the ubiquitin ligase pathway that regulates Golgi morphogenesis and dendrite patterning in brain. Required to localize CUL7 to the Golgi apparatus in neurons. The chain is Obscurin-like protein 1 (Obsl1) from Rattus norvegicus (Rat).